Reading from the N-terminus, the 330-residue chain is tRNA(Ile)-lysidine synthase (330 aa).

Position 31-36 (31-36 (SGGQDS)) interacts with ATP.

Belongs to the tRNA(Ile)-lysidine synthase family.

It is found in the cytoplasm. It catalyses the reaction cytidine(34) in tRNA(Ile2) + L-lysine + ATP = lysidine(34) in tRNA(Ile2) + AMP + diphosphate + H(+). Its function is as follows. Ligates lysine onto the cytidine present at position 34 of the AUA codon-specific tRNA(Ile) that contains the anticodon CAU, in an ATP-dependent manner. Cytidine is converted to lysidine, thus changing the amino acid specificity of the tRNA from methionine to isoleucine. This Synechocystis sp. (strain ATCC 27184 / PCC 6803 / Kazusa) protein is tRNA(Ile)-lysidine synthase.